A 356-amino-acid chain; its full sequence is MEKLYINLDENSYWIYIGKGLLPTLGKHVAGADKILLITDENVEKYYGDQITQIVEGRILEKVILRPGEPTKNLGNVGHLLEIMLEKGLTRSSKVIALGGGVIGDIAGFTASIYMRGIDFIQVPTTLLAQVDSSVGGKTGVNLEQGKNMVGSFYQPKVVVIDIDLLKTLPHRELISGLGEIIKYGIIYDGEFFDYINENLWNLLALEETVVTKIIKRCCEIKAAIVSQDEQEMGVRKILNFGHTIGHGIEALTHYEKYTHGEAVILGMYYEAQIAKNRGYIDESYFRDIEMIIRKTGLDLNISQFILTDLLDAMTKDKKNKGGKISFILPRGKGNVQEVLLTPEELATFLYTYLYV.

NAD(+)-binding positions include 101–105 (GVIGD), 125–126 (TT), K138, and K147. Zn(2+) contacts are provided by E180, H243, and H260.

The protein belongs to the sugar phosphate cyclases superfamily. Dehydroquinate synthase family. The cofactor is Co(2+). Zn(2+) serves as cofactor. Requires NAD(+) as cofactor.

The protein resides in the cytoplasm. The enzyme catalyses 7-phospho-2-dehydro-3-deoxy-D-arabino-heptonate = 3-dehydroquinate + phosphate. Its pathway is metabolic intermediate biosynthesis; chorismate biosynthesis; chorismate from D-erythrose 4-phosphate and phosphoenolpyruvate: step 2/7. In terms of biological role, catalyzes the conversion of 3-deoxy-D-arabino-heptulosonate 7-phosphate (DAHP) to dehydroquinate (DHQ). This Alkaliphilus metalliredigens (strain QYMF) protein is 3-dehydroquinate synthase.